A 376-amino-acid polypeptide reads, in one-letter code: Putative F-box protein At1g30930 (376 aa).

The region spanning 1-44 (MKNSIPIDLIIEIVSRSTAKSVARCHCVSKQWRAIFRRKYFIEL) is the F-box domain.

This Arabidopsis thaliana (Mouse-ear cress) protein is Putative F-box protein At1g30930.